The sequence spans 660 residues: V-type ATP synthase subunit I (660 aa).

A run of 7 helical transmembrane segments spans residues 312 to 332 (FFAF…GLLF), 362 to 382 (ILGL…GMSF), 453 to 473 (FIDN…LSLG), 485 to 505 (IGWI…LGTV), 520 to 540 (GQIG…LAMI), 560 to 580 (VLSY…GATF), and 593 to 613 (SIVI…GGVI).

It belongs to the V-ATPase 116 kDa subunit family.

Its subcellular location is the cell membrane. Produces ATP from ADP in the presence of a proton gradient across the membrane. The polypeptide is V-type ATP synthase subunit I (atpI) (Chlamydia pneumoniae (Chlamydophila pneumoniae)).